Here is a 78-residue protein sequence, read N- to C-terminus: Defensin-like protein 171 (78 aa).

Residues Met-1–Gln-23 form the signal peptide. 4 cysteine pairs are disulfide-bonded: Cys-27/Cys-71, Cys-34/Cys-56, Cys-40/Cys-65, and Cys-44/Cys-67.

The protein belongs to the DEFL family.

It is found in the secreted. In Arabidopsis thaliana (Mouse-ear cress), this protein is Defensin-like protein 171 (LCR61).